The sequence spans 322 residues: MFEIHPVKKVSVVIPVYNEQESLPELIRRTTAACESLGKEYEILLIDDGSSDNSAHMLVEASQAEGSHIVSILLNRNYGQHSAIMAGFSHVTGDLIITLDADLQNPPEEIPRLVAKADEGYDVVGTVRQNRQDSWFRKTASKMINRLIQRTTGKAMGDYGCMLRAYRRHIVDAMLHCHERSTFIPILANIFARRAIEIPVHHAEREFGESKYSFMRLINLMYDLVTCLTTTPLRMLSLLGSIIAIGGFSIAVLLVILRLTFGPQWAAEGVFMLFAVLFTFIGAQFIGMGLLGEYIGRIYTDVRARPRYFVQQVIRPSSKENE.

The Cytoplasmic portion of the chain corresponds to 1 to 235 (MFEIHPVKKV…TCLTTTPLRM (235 aa)). Residues 236–256 (LSLLGSIIAIGGFSIAVLLVI) form a helical membrane-spanning segment. Topologically, residues 257–269 (LRLTFGPQWAAEG) are periplasmic. A helical transmembrane segment spans residues 270–290 (VFMLFAVLFTFIGAQFIGMGL). Topologically, residues 291–322 (LGEYIGRIYTDVRARPRYFVQQVIRPSSKENE) are cytoplasmic.

Belongs to the glycosyltransferase 2 family.

Its subcellular location is the cell inner membrane. The enzyme catalyses UDP-4-deoxy-4-formamido-beta-L-arabinose + di-trans,octa-cis-undecaprenyl phosphate = 4-deoxy-4-formamido-alpha-L-arabinopyranosyl di-trans,octa-cis-undecaprenyl phosphate + UDP. Its pathway is glycolipid biosynthesis; 4-amino-4-deoxy-alpha-L-arabinose undecaprenyl phosphate biosynthesis; 4-amino-4-deoxy-alpha-L-arabinose undecaprenyl phosphate from UDP-4-deoxy-4-formamido-beta-L-arabinose and undecaprenyl phosphate: step 1/2. It functions in the pathway bacterial outer membrane biogenesis; lipopolysaccharide biosynthesis. Catalyzes the transfer of 4-deoxy-4-formamido-L-arabinose from UDP to undecaprenyl phosphate. The modified arabinose is attached to lipid A and is required for resistance to polymyxin and cationic antimicrobial peptides. The chain is Undecaprenyl-phosphate 4-deoxy-4-formamido-L-arabinose transferase from Escherichia coli O45:K1 (strain S88 / ExPEC).